A 308-amino-acid polypeptide reads, in one-letter code: KH domain-containing protein At4g26480 (308 aa).

Positions 1-26 (MMMMTSLGGGAGGGGGGGGSGGGRFV) are disordered. Gly residues predominate over residues 7–24 (LGGGAGGGGGGGGSGGGR). Residues 165 to 232 (DIPVDKYPNY…EHLNEPLHIL (68 aa)) form the KH domain. Residues 284-308 (EEGSPMSGSISPYNSLGMKRAKTRG) form a disordered region. The residue at position 294 (S294) is a Phosphoserine.

The protein localises to the nucleus. This Arabidopsis thaliana (Mouse-ear cress) protein is KH domain-containing protein At4g26480.